A 121-amino-acid chain; its full sequence is Large ribosomal subunit protein bL12 (121 aa).

This sequence belongs to the bacterial ribosomal protein bL12 family. Homodimer. Part of the ribosomal stalk of the 50S ribosomal subunit. Forms a multimeric L10(L12)X complex, where L10 forms an elongated spine to which 2 to 4 L12 dimers bind in a sequential fashion. Binds GTP-bound translation factors.

Its function is as follows. Forms part of the ribosomal stalk which helps the ribosome interact with GTP-bound translation factors. Is thus essential for accurate translation. The chain is Large ribosomal subunit protein bL12 from Proteus mirabilis (strain HI4320).